Here is a 303-residue protein sequence, read N- to C-terminus: Methionyl-tRNA formyltransferase (303 aa).

108 to 111 (SDLP) serves as a coordination point for (6S)-5,6,7,8-tetrahydrofolate.

The protein belongs to the Fmt family.

The enzyme catalyses L-methionyl-tRNA(fMet) + (6R)-10-formyltetrahydrofolate = N-formyl-L-methionyl-tRNA(fMet) + (6S)-5,6,7,8-tetrahydrofolate + H(+). Its function is as follows. Attaches a formyl group to the free amino group of methionyl-tRNA(fMet). The formyl group appears to play a dual role in the initiator identity of N-formylmethionyl-tRNA by promoting its recognition by IF2 and preventing the misappropriation of this tRNA by the elongation apparatus. The polypeptide is Methionyl-tRNA formyltransferase (Rickettsia felis (strain ATCC VR-1525 / URRWXCal2) (Rickettsia azadi)).